The sequence spans 466 residues: Tryptophan synthase beta chain 2, chloroplastic (466 aa).

Position 161 is an N6-(pyridoxal phosphate)lysine (Lys161).

It belongs to the TrpB family. As to quaternary structure, tetramer of two alpha and two beta chains. It depends on pyridoxal 5'-phosphate as a cofactor.

Its subcellular location is the plastid. The protein resides in the chloroplast. It carries out the reaction (1S,2R)-1-C-(indol-3-yl)glycerol 3-phosphate + L-serine = D-glyceraldehyde 3-phosphate + L-tryptophan + H2O. It participates in amino-acid biosynthesis; L-tryptophan biosynthesis; L-tryptophan from chorismate: step 5/5. The beta subunit is responsible for the synthesis of L-tryptophan from indole and L-serine. The chain is Tryptophan synthase beta chain 2, chloroplastic (TSB) from Camptotheca acuminata (Happy tree).